A 445-amino-acid polypeptide reads, in one-letter code: Enolase 1 (445 aa).

Substrate contacts are provided by histidine 164 and glutamate 173. The Proton donor role is filled by glutamate 216. Residues aspartate 251, glutamate 301, and aspartate 328 each contribute to the Mg(2+) site. 2 residues coordinate substrate: glutamate 301 and aspartate 328. Residue lysine 353 is the Proton acceptor of the active site. Residues 380 to 383 (SHRS) and lysine 404 contribute to the substrate site.

It belongs to the enolase family. Homodimer. Mg(2+) serves as cofactor.

Its subcellular location is the cytoplasm. It catalyses the reaction (2R)-2-phosphoglycerate = phosphoenolpyruvate + H2O. It functions in the pathway carbohydrate degradation; glycolysis; pyruvate from D-glyceraldehyde 3-phosphate: step 4/5. This Hevea brasiliensis (Para rubber tree) protein is Enolase 1 (ENO1).